The primary structure comprises 1220 residues: Osmosensing histidine protein kinase SLN1 (1220 aa).

Residues 1–22 lie on the Cytoplasmic side of the membrane; it reads MRFGLPSKLELTPPFRIGIRTQ. Residues 23–46 form a helical membrane-spanning segment; the sequence is LTALVSIVALGSLIILAVTTGVYF. Residues 47 to 333 are Extracellular-facing; sequence TSNYKNLRSD…FLSPATKLAK (287 aa). N-linked (GlcNAc...) asparagine glycans are attached at residues asparagine 100, asparagine 138, asparagine 142, asparagine 181, asparagine 224, and asparagine 272. Residues 334–354 traverse the membrane as a helical segment; it reads IITGTVIAIGVFVILLTLPLA. The Cytoplasmic portion of the chain corresponds to 355 to 1220; the sequence is HWAVQPIVRL…AAYQGKKNNK (866 aa). 2 disordered regions span residues 414–433 and 444–500; these read GSTT…GAAF and NLGN…HILT. Residues 451-468 show a composition bias toward basic and acidic residues; the sequence is SPPEEENKIPNNHTDAKI. Phosphoserine is present on serine 502. The region spanning 573–928 is the Histidine kinase domain; sequence NISHELRTPL…KFTFTLPLNQ (356 aa). Histidine 576 bears the Phosphohistidine; by autocatalysis mark. A phosphoserine mark is found at serine 758 and serine 833. 2 disordered regions span residues 960-1016 and 1040-1081; these read AKSI…DNGG and NSLS…VKDD. Polar residues predominate over residues 965–984; that stretch reads SRQSTSSVATPATNRSSLTN. Over residues 988–1000 the composition is skewed to basic and acidic residues; sequence PEVRSKGKHETKD. A phosphoserine mark is found at serine 1041 and serine 1044. The segment covering 1063 to 1075 has biased composition (polar residues); the sequence is LQSTGTATSSRNI. A Response regulatory domain is found at 1089 to 1210; the sequence is KILVVEDNHV…KLKTILTEFC (122 aa). Mg(2+)-binding residues include glutamate 1094, aspartate 1095, aspartate 1144, and lysine 1195. Aspartate 1144 carries the 4-aspartylphosphate modification.

As to quaternary structure, interacts with DJP1, MOG1 and YPD1. The phosphorelay mechanism involves the sequential transfer of a phosphate group from His-576 (H1) in the histidine kinase domain (transmitter domain) to Asp-1144 (D1) of the response regulatory domain (receiver domain). This transfer probably occurs between two SLN1 molecules, rather than intramolecularly. The phosphate group is further transferred to 'His-64' (H2) of YPD1 and finally to 'Asp-554' (D2) of SSK1 or 'Asp-427' (D2) of SKN7.

The protein resides in the cell membrane. The enzyme catalyses ATP + protein L-histidine = ADP + protein N-phospho-L-histidine.. Functionally, histidine kinase that acts as an osmosensor at the plasma membrane. Part of the bifurcated SLN1-YPD1-SKN7/SSK1 two-component regulatory system, which controls activity of the HOG1 pathway and gene expression in response to changes in the osmolarity of the extracellular environment. Under normal osmotic conditions, the histidine kinase autophosphorylates His-576. This phosphate is subsequently transferred to Asp-1144, from where it is relayed to 'His-64' of the phosphorelay intermediate protein YPD1. Under high osmolarity conditions, the histidine kinase is no longer active. This is Osmosensing histidine protein kinase SLN1 (SLN1) from Saccharomyces cerevisiae (strain ATCC 204508 / S288c) (Baker's yeast).